The primary structure comprises 781 residues: Penicillin-binding protein 1B (781 aa).

The tract at residues 151-322 is transglycosylase; the sequence is FRLAPKLIAM…SLYNPWRNPQ (172 aa). The active-site Proton donor; for transglycosylase activity is the Glu-188. The segment at 415 to 702 is transpeptidase; it reads SQLQLKMKNP…ALQIYKDYLN (288 aa). Ser-466 (acyl-ester intermediate; for transpeptidase activity) is an active-site residue. The span at 749-768 shows a compositional bias: low complexity; it reads ETSSPSLTPTTETETPPQES. Residues 749-781 are disordered; sequence ETSSPSLTPTTETETPPQESLWDVLDNPNPPAQ.

The protein in the N-terminal section; belongs to the glycosyltransferase 51 family. This sequence in the C-terminal section; belongs to the transpeptidase family.

It localises to the cell inner membrane. The catalysed reaction is [GlcNAc-(1-&gt;4)-Mur2Ac(oyl-L-Ala-gamma-D-Glu-L-Lys-D-Ala-D-Ala)](n)-di-trans,octa-cis-undecaprenyl diphosphate + beta-D-GlcNAc-(1-&gt;4)-Mur2Ac(oyl-L-Ala-gamma-D-Glu-L-Lys-D-Ala-D-Ala)-di-trans,octa-cis-undecaprenyl diphosphate = [GlcNAc-(1-&gt;4)-Mur2Ac(oyl-L-Ala-gamma-D-Glu-L-Lys-D-Ala-D-Ala)](n+1)-di-trans,octa-cis-undecaprenyl diphosphate + di-trans,octa-cis-undecaprenyl diphosphate + H(+). The enzyme catalyses Preferential cleavage: (Ac)2-L-Lys-D-Ala-|-D-Ala. Also transpeptidation of peptidyl-alanyl moieties that are N-acyl substituents of D-alanine.. It participates in cell wall biogenesis; peptidoglycan biosynthesis. Cell wall formation. Synthesis of cross-linked peptidoglycan from the lipid intermediates. The enzyme has a penicillin-insensitive transglycosylase N-terminal domain (formation of linear glycan strands) and a penicillin-sensitive transpeptidase C-terminal domain (cross-linking of the peptide subunits). The sequence is that of Penicillin-binding protein 1B (mrcB) from Haemophilus influenzae (strain ATCC 51907 / DSM 11121 / KW20 / Rd).